We begin with the raw amino-acid sequence, 379 residues long: 4-hydroxy-3-methylbut-2-enyl diphosphate reductase (379 aa).

C39 serves as a coordination point for [4Fe-4S] cluster. H69 serves as a coordination point for (2E)-4-hydroxy-3-methylbut-2-enyl diphosphate. H69 provides a ligand contact to dimethylallyl diphosphate. H69 lines the isopentenyl diphosphate pocket. Residue C130 participates in [4Fe-4S] cluster binding. H158 is a (2E)-4-hydroxy-3-methylbut-2-enyl diphosphate binding site. Residue H158 coordinates dimethylallyl diphosphate. H158 contributes to the isopentenyl diphosphate binding site. E160 functions as the Proton donor in the catalytic mechanism. Position 223 (T223) interacts with (2E)-4-hydroxy-3-methylbut-2-enyl diphosphate. C261 contacts [4Fe-4S] cluster. Residues S290, S291, N292, and S352 each coordinate (2E)-4-hydroxy-3-methylbut-2-enyl diphosphate. Dimethylallyl diphosphate-binding residues include S290, S291, N292, and S352. 4 residues coordinate isopentenyl diphosphate: S290, S291, N292, and S352.

The protein belongs to the IspH family. It depends on [4Fe-4S] cluster as a cofactor.

The catalysed reaction is isopentenyl diphosphate + 2 oxidized [2Fe-2S]-[ferredoxin] + H2O = (2E)-4-hydroxy-3-methylbut-2-enyl diphosphate + 2 reduced [2Fe-2S]-[ferredoxin] + 2 H(+). It catalyses the reaction dimethylallyl diphosphate + 2 oxidized [2Fe-2S]-[ferredoxin] + H2O = (2E)-4-hydroxy-3-methylbut-2-enyl diphosphate + 2 reduced [2Fe-2S]-[ferredoxin] + 2 H(+). It participates in isoprenoid biosynthesis; dimethylallyl diphosphate biosynthesis; dimethylallyl diphosphate from (2E)-4-hydroxy-3-methylbutenyl diphosphate: step 1/1. Its pathway is isoprenoid biosynthesis; isopentenyl diphosphate biosynthesis via DXP pathway; isopentenyl diphosphate from 1-deoxy-D-xylulose 5-phosphate: step 6/6. Its function is as follows. Catalyzes the conversion of 1-hydroxy-2-methyl-2-(E)-butenyl 4-diphosphate (HMBPP) into a mixture of isopentenyl diphosphate (IPP) and dimethylallyl diphosphate (DMAPP). Acts in the terminal step of the DOXP/MEP pathway for isoprenoid precursor biosynthesis. This is 4-hydroxy-3-methylbut-2-enyl diphosphate reductase from Synechocystis sp. (strain ATCC 27184 / PCC 6803 / Kazusa).